Reading from the N-terminus, the 852-residue chain is SPS-sensor component SSY1 (852 aa).

The Cytoplasmic segment spans residues 1–285 (MSSVNQIYDL…HIQRKLKVRH (285 aa)). The segment at 21 to 41 (DSHSQEHDTSSSLAKNDTDGT) is disordered. Residues 30–41 (SSSLAKNDTDGT) show a composition bias toward polar residues. A helical membrane pass occupies residues 286–306 (IQMLSIGACFSVGLFLTSGKA). The Extracellular segment spans residues 307–329 (FSIAGPFGTLLGFGLTGSIILAT). A helical membrane pass occupies residues 330-350 (MLSFTELSTLIPVSSGFSGLA). At 351 to 357 (SRFVEDA) the chain is on the cytoplasmic side. A helical transmembrane segment spans residues 358-378 (FGFALGWTYWISCMLALPAQV). Over 379–400 (SSSTFYLSYYNNVNISKGVTAG) the chain is Extracellular. The helical transmembrane segment at 401 to 421 (FITLFSAFSIVVNLLDVSIMG) threads the bilayer. A topological domain (cytoplasmic) is located at residue glutamate 422. Residues 423 to 443 (IVYVAGISKVIIAILMVFTMI) traverse the membrane as a helical segment. Topologically, residues 444 to 500 (ILNAGHGNDIHEGVGFRYWDSSKSVRNLTYGLYRPTFDLADAGEGSKKGISGPKGRF) are extracellular. Residues 501–521 (LATASVMLISTFAFSGVEMTF) traverse the membrane as a helical segment. Residues 522-540 (LASGEAINPRKTIPSATKR) lie on the Cytoplasmic side of the membrane. The chain crosses the membrane as a helical span at residues 541–561 (TFSIVLISYVFLIFSVGINIY). Over 562 to 623 (SGDPRLLSYF…PWVVALQNFG (62 aa)) the chain is Extracellular. Residues 624 to 644 (LCTFASAFNAILIFFTATAGI) traverse the membrane as a helical segment. Residues 645–673 (SSLFSCSRTLYAMSVQRKAPPVFEICSKR) lie on the Cytoplasmic side of the membrane. Residues 674–694 (GVPYVSVIFSSLFSVIAYIAV) traverse the membrane as a helical segment. The Extracellular segment spans residues 695-703 (DQTAIENFD). The helical transmembrane segment at 704-724 (VLANVSSASTSIIWMGLNLSF) threads the bilayer. The Cytoplasmic portion of the chain corresponds to 725 to 755 (LRFYYALKQRKDIISRNDSSYPYKSPFQPYL). Residues 756 to 776 (AIYGLVGCSLFVIFMGYPNFI) traverse the membrane as a helical segment. Topologically, residues 777–784 (HHFWSTKA) are extracellular. Residues 785–805 (FFSAYGGLMFFFISYTAYKVL) traverse the membrane as a helical segment. Residues 806 to 852 (GTSKIQRLDQLDMDSGRREMDRTDWTEHSQYLGTYRERAKKLVTWLI) lie on the Cytoplasmic side of the membrane.

The protein belongs to the amino acid-polyamine-organocation (APC) superfamily. In terms of assembly, component of the plasma membrane SPS (SSY1-PTR3-SSY5) amino acid sensor complex. Interacts directly with PTR3 and SSY5. Interacts with YCK1.

Its subcellular location is the cell membrane. In terms of biological role, amino acid sensor component of the SPS-sensor system, which regulates the expression of several amino acid-metabolizing enzymes and amino acid- and peptide-permeases in response to extracellular amino acid levels by controlling the activity of two transcription factors, STP1 and STP2. Amino-acid permease homolog that seems to interact directly with the extracellular signaling molecules, but has no amino acid transporter activity. May recruit casein kinases YCK1 and YCK2 to hyperphosphorylate and activate downstream component PTR3 in response to amino acid stimulus. In Saccharomyces cerevisiae (strain ATCC 204508 / S288c) (Baker's yeast), this protein is SPS-sensor component SSY1 (SSY1).